The sequence spans 118 residues: Large ribosomal subunit protein bL20 (118 aa).

Belongs to the bacterial ribosomal protein bL20 family.

In terms of biological role, binds directly to 23S ribosomal RNA and is necessary for the in vitro assembly process of the 50S ribosomal subunit. It is not involved in the protein synthesizing functions of that subunit. This is Large ribosomal subunit protein bL20 from Pseudomonas fluorescens (strain ATCC BAA-477 / NRRL B-23932 / Pf-5).